Reading from the N-terminus, the 80-residue chain is Toxin Acra1 (80 aa).

The first 22 residues, 1–22, serve as a signal peptide directing secretion; it reads MMKLVLFSIIVILFSLIGSIHG. An LCN-type CS-alpha/beta domain is found at 25–80; it reads VPGNYPLDSSGNKYPCTVLGDNQSCIDVCKKHGVKYGYCYSFKCWCEFLEDKNVSI. 3 disulfide bridges follow: cysteine 40–cysteine 63, cysteine 49–cysteine 68, and cysteine 53–cysteine 70.

As to expression, expressed by the venom gland.

Its subcellular location is the secreted. Probable neurotoxin that inhibits ion channels. Is toxic to mice. Is about 2.8% of the total protein in the venom. The chain is Toxin Acra1 from Androctonus crassicauda (Arabian fat-tailed scorpion).